The chain runs to 389 residues: Chalcone synthase 4 (389 aa).

Residue Cys-164 is part of the active site.

It belongs to the thiolase-like superfamily. Chalcone/stilbene synthases family.

The enzyme catalyses (E)-4-coumaroyl-CoA + 3 malonyl-CoA + 3 H(+) = 2',4,4',6'-tetrahydroxychalcone + 3 CO2 + 4 CoA. It participates in secondary metabolite biosynthesis; flavonoid biosynthesis. The primary product of this enzyme is 4,2',4',6'-tetrahydroxychalcone (also termed naringenin-chalcone or chalcone) which can under specific conditions spontaneously isomerize into naringenin. This is Chalcone synthase 4 (CHS4) from Pisum sativum (Garden pea).